We begin with the raw amino-acid sequence, 75 residues long: Small ribosomal subunit protein bS18 (75 aa).

The protein belongs to the bacterial ribosomal protein bS18 family. Part of the 30S ribosomal subunit. Forms a tight heterodimer with protein bS6.

Functionally, binds as a heterodimer with protein bS6 to the central domain of the 16S rRNA, where it helps stabilize the platform of the 30S subunit. The sequence is that of Small ribosomal subunit protein bS18 from Roseobacter denitrificans (strain ATCC 33942 / OCh 114) (Erythrobacter sp. (strain OCh 114)).